A 264-amino-acid chain; its full sequence is Glutamate racemase (264 aa).

Substrate is bound by residues Asp-10–Ser-11 and Tyr-42–Gly-43. The active-site Proton donor/acceptor is Cys-73. Asn-74–Thr-75 provides a ligand contact to substrate. Catalysis depends on Cys-183, which acts as the Proton donor/acceptor. Residue Thr-184–His-185 participates in substrate binding.

It belongs to the aspartate/glutamate racemases family.

It catalyses the reaction L-glutamate = D-glutamate. The protein operates within cell wall biogenesis; peptidoglycan biosynthesis. Functionally, provides the (R)-glutamate required for cell wall biosynthesis. The sequence is that of Glutamate racemase from Streptococcus pyogenes serotype M3 (strain ATCC BAA-595 / MGAS315).